The following is a 101-amino-acid chain: Large ribosomal subunit protein uL23c (101 aa).

The protein belongs to the universal ribosomal protein uL23 family. Part of the 50S ribosomal subunit.

The protein resides in the plastid. It is found in the chloroplast. Its function is as follows. Binds to 23S rRNA. The sequence is that of Large ribosomal subunit protein uL23c (rpl23) from Cyanidium caldarium (Red alga).